The primary structure comprises 840 residues: Kinesin-like protein KIN-14J (840 aa).

Positions 1 to 74 (MEADPAPSST…KGEEPVVSAE (74 aa)) are disordered. Residues 177–501 (NIRVFCRCRP…LNFASRVRAI (325 aa)) form the Kinesin motor domain. Residue 260–267 (GQTGTGKT) participates in ATP binding. Residues 517–594 (KLKQMTEKIR…KKAARDTARS (78 aa)) are a coiled coil. Residues 581-593 (LANEKKAARDTAR) are compositionally biased toward basic and acidic residues. Residues 581–617 (LANEKKAARDTARSTKPPLAPMRQRPPLGRIGNHIPP) form a disordered region.

This sequence belongs to the TRAFAC class myosin-kinesin ATPase superfamily. Kinesin family. KIN-14 subfamily.

The sequence is that of Kinesin-like protein KIN-14J from Oryza sativa subsp. japonica (Rice).